Consider the following 792-residue polypeptide: Endonuclease MutS2 (792 aa).

Residue 334–341 participates in ATP binding; it reads GPNTGGKT. Positions 717-792 constitute a Smr domain; the sequence is IDLRGMMLSE…ENGVTVVELK (76 aa).

The protein belongs to the DNA mismatch repair MutS family. MutS2 subfamily. As to quaternary structure, homodimer. Binds to stalled ribosomes, contacting rRNA.

Functionally, endonuclease that is involved in the suppression of homologous recombination and thus may have a key role in the control of bacterial genetic diversity. In terms of biological role, acts as a ribosome collision sensor, splitting the ribosome into its 2 subunits. Detects stalled/collided 70S ribosomes which it binds and splits by an ATP-hydrolysis driven conformational change. Acts upstream of the ribosome quality control system (RQC), a ribosome-associated complex that mediates the extraction of incompletely synthesized nascent chains from stalled ribosomes and their subsequent degradation. Probably generates substrates for RQC. This Ruminiclostridium cellulolyticum (strain ATCC 35319 / DSM 5812 / JCM 6584 / H10) (Clostridium cellulolyticum) protein is Endonuclease MutS2.